An 894-amino-acid polypeptide reads, in one-letter code: Pentatricopeptide repeat-containing protein At1g19720 (894 aa).

PPR repeat units follow at residues 80 to 110, 114 to 144, 145 to 179, 180 to 214, 215 to 245, 246 to 280, 281 to 315, 316 to 350, 351 to 385, 386 to 416, 417 to 451, 452 to 486, 488 to 522, 523 to 557, 558 to 588, 589 to 623, 624 to 659, and 660 to 694; these read KRST…FGLF, DVFV…MRER, NLFT…GVLP, DDFL…GMSS, CLRV…MRER, DVIA…GISP, GLVT…GITA, DVFT…GVVP, NAVT…GFID, DVLV…VKNK, DVYT…NLRP, NIIT…GKVQ, NTAT…RFMP, NSVT…NLDA, IHAV…METK, DIIT…GITP, NRGT…HIIP, and ALEH…SETP. Positions 695-770 are type E motif; sequence IWESFLTGCR…PLGQSWIEVR (76 aa). Positions 771–801 are type E(+) motif; sequence NLIHTFTTGDQSKLCTDVLYPLVEKMSRLDN. The segment at 803–894 is type DYW motif; sequence SDQYNGELWI…NGDCSCKDYW (92 aa).

Belongs to the PPR family. PCMP-H subfamily.

The protein is Pentatricopeptide repeat-containing protein At1g19720 (DYW7) of Arabidopsis thaliana (Mouse-ear cress).